A 226-amino-acid chain; its full sequence is HTH-type transcriptional regulator TcmR (226 aa).

Residues 1 to 16 (MDSAETDTPSTRSTPN) show a composition bias toward polar residues. The segment at 1–25 (MDSAETDTPSTRSTPNGPGLRQRKL) is disordered. The HTH tetR-type domain occupies 26-86 (RRTRDQLIRE…TPISAIDEAF (61 aa)). Residues 49-68 (TVEQIAEAVEVHPRTFFRHF) constitute a DNA-binding region (H-T-H motif).

It functions in the pathway antibiotic biosynthesis; tetracenomycin C biosynthesis. In terms of biological role, represses transcription of the divergently oriented tcmR and tcmA (tetracenomycin C resistance and export) genes by binding to an intergenic operator region. This binding is inhibited by tetracenomycin C. The sequence is that of HTH-type transcriptional regulator TcmR (tcmR) from Streptomyces glaucescens.